The following is a 101-amino-acid chain: MTLTKAELADLLFEKVGFNKREAKDMVESFYEEVRIALQNGDGVKLSGFGNFQLRDKPQRPGRNPKTGEEIPITARRVVTFHASQKLKAMVEKNQHGKDNA.

The disordered stretch occupies residues 49 to 70 (FGNFQLRDKPQRPGRNPKTGEE).

This sequence belongs to the bacterial histone-like protein family. As to quaternary structure, heterodimer of an alpha and a beta chain.

This protein is one of the two subunits of integration host factor, a specific DNA-binding protein that functions in genetic recombination as well as in transcriptional and translational control. In Nitrosospira multiformis (strain ATCC 25196 / NCIMB 11849 / C 71), this protein is Integration host factor subunit alpha.